A 168-amino-acid chain; its full sequence is GTP-dependent dephospho-CoA kinase (168 aa).

6 residues coordinate GTP: aspartate 49, valine 50, valine 51, aspartate 68, lysine 70, and glutamate 120.

Belongs to the GTP-dependent DPCK family.

The catalysed reaction is 3'-dephospho-CoA + GTP = GDP + CoA + H(+). Its pathway is cofactor biosynthesis; coenzyme A biosynthesis. In terms of biological role, catalyzes the GTP-dependent phosphorylation of the 3'-hydroxyl group of dephosphocoenzyme A to form coenzyme A (CoA). The sequence is that of GTP-dependent dephospho-CoA kinase from Pyrobaculum neutrophilum (strain DSM 2338 / JCM 9278 / NBRC 100436 / V24Sta) (Thermoproteus neutrophilus).